We begin with the raw amino-acid sequence, 360 residues long: Peptide chain release factor 1 (360 aa).

At Gln-234 the chain carries N5-methylglutamine. Positions 285 to 305 (RAQGIAEDRKSQVGTGDRSER) are disordered.

The protein belongs to the prokaryotic/mitochondrial release factor family. Post-translationally, methylated by PrmC. Methylation increases the termination efficiency of RF1.

Its subcellular location is the cytoplasm. Peptide chain release factor 1 directs the termination of translation in response to the peptide chain termination codons UAG and UAA. In Clostridium beijerinckii (strain ATCC 51743 / NCIMB 8052) (Clostridium acetobutylicum), this protein is Peptide chain release factor 1.